A 735-amino-acid polypeptide reads, in one-letter code: Muskelin (735 aa).

Alanine 2 is modified (N-acetylalanine). The 33-residue stretch at 172 to 204 (REQEAIRLCLKHFRQHNYTEAFESLQKKTKIAL) folds into the LisH domain. The CTLH domain occupies 206–258 (HPMLTDIHDKLVLKGDFDACEELIEKAVNDGLFNQYISQQEYKPRWSQIIPKS). 6 Kelch repeats span residues 284–330 (TVYL…SCHK), 339–391 (QIYT…FDHQ), 408–458 (ILTC…SRIG), 469–515 (CLYV…TGFT), 526–578 (EIHV…SLQE), and 597–651 (VHYL…AQMD).

As to quaternary structure, homodimer; may form higher oligomers. Identified in the CTLH complex that contains GID4, RANBP9 and/or RANBP10, MKLN1, MAEA, RMND5A (or alternatively its paralog RMND5B), GID8, ARMC8, WDR26 and YPEL5. Within this complex, MAEA, RMND5A (or alternatively its paralog RMND5B), GID8, WDR26, and RANBP9 and/or RANBP10 form the catalytic core, while GID4, MKLN1, ARMC8 and YPEL5 have ancillary roles. Interacts with RANBP9. Part of a complex consisting of RANBP9, MKLN1 and GID8. Interacts with GABRA1. Interacts with the C-terminal tail of PTGER3.

It localises to the cytoplasm. It is found in the cytosol. Its subcellular location is the nucleus. The protein resides in the nucleoplasm. The protein localises to the cell projection. It localises to the ruffle. It is found in the cell cortex. Its subcellular location is the synapse. The protein resides in the postsynapse. Its function is as follows. Component of the CTLH E3 ubiquitin-protein ligase complex that selectively accepts ubiquitin from UBE2H and mediates ubiquitination and subsequent proteasomal degradation of the transcription factor HBP1. Required for internalization of the GABA receptor GABRA1 from the cell membrane via endosomes and subsequent GABRA1 degradation. Acts as a mediator of cell spreading and cytoskeletal responses to the extracellular matrix component THBS1. This Pongo abelii (Sumatran orangutan) protein is Muskelin (MKLN1).